The sequence spans 1041 residues: Beta-galactosidase (1041 aa).

Positions 103 and 201 each coordinate substrate. D201 serves as a coordination point for Na(+). Positions 415, 417, and 460 each coordinate Mg(2+). Substrate is bound by residues E460 and 536–539 (EYAH). Catalysis depends on E460, which acts as the Proton donor. E536 (nucleophile) is an active-site residue. N596 is a Mg(2+) binding site. F600 and N603 together coordinate Na(+). Substrate contacts are provided by N603 and W1016.

The protein belongs to the glycosyl hydrolase 2 family. In terms of assembly, homotetramer. Mg(2+) serves as cofactor. Na(+) is required as a cofactor.

The catalysed reaction is Hydrolysis of terminal non-reducing beta-D-galactose residues in beta-D-galactosides.. This Alteromonas mediterranea (strain DSM 17117 / CIP 110805 / LMG 28347 / Deep ecotype) protein is Beta-galactosidase.